The chain runs to 297 residues: tRNA pseudouridine synthase B (297 aa).

The active-site Nucleophile is the aspartate 44.

Belongs to the pseudouridine synthase TruB family. Type 1 subfamily.

It carries out the reaction uridine(55) in tRNA = pseudouridine(55) in tRNA. Responsible for synthesis of pseudouridine from uracil-55 in the psi GC loop of transfer RNAs. This Corynebacterium aurimucosum (strain ATCC 700975 / DSM 44827 / CIP 107346 / CN-1) (Corynebacterium nigricans) protein is tRNA pseudouridine synthase B.